The sequence spans 169 residues: Biogenesis of lysosome-related organelles complex 1 subunit 4 (169 aa).

The protein belongs to the BLOC1S4 family. Component of the biogenesis of lysosome-related organelles complex-1 (BLOC-1) composed of Blos1, Blos2, Blos3, Blos4, Dysb, Muted, Pldn and Snapin. Interacts with Pldn.

Functionally, component of the biogenesis of lysosome-related organelles complex-1 (BLOC-1) involved in pigment granule biogenesis. The chain is Biogenesis of lysosome-related organelles complex 1 subunit 4 from Drosophila melanogaster (Fruit fly).